Consider the following 178-residue polypeptide: Peptide deformylase 2 (178 aa).

Positions 101 and 143 each coordinate Fe cation. Residue glutamate 144 is part of the active site. Residue histidine 147 participates in Fe cation binding.

This sequence belongs to the polypeptide deformylase family. Requires Fe(2+) as cofactor.

It catalyses the reaction N-terminal N-formyl-L-methionyl-[peptide] + H2O = N-terminal L-methionyl-[peptide] + formate. Removes the formyl group from the N-terminal Met of newly synthesized proteins. Requires at least a dipeptide for an efficient rate of reaction. N-terminal L-methionine is a prerequisite for activity but the enzyme has broad specificity at other positions. This chain is Peptide deformylase 2, found in Pseudomonas putida (strain ATCC 47054 / DSM 6125 / CFBP 8728 / NCIMB 11950 / KT2440).